A 420-amino-acid chain; its full sequence is DFGHSKKIRKNVHSLTAEEQNSLRRAMDDLQDDKTRGGFQQIAAFHGEPKWCPRPEAEKKFACCVHGMAVFPHWHRLLTVQGENALRKHGFTGGLPYWDWTRPMSALPHFVADPTYDDSVSSLEEDNPYSHGHIDSVGHDTTRAVRDDLYQSPGFGHYTDIAKQVLLALEQDDFCDFEVQFEIAHNSIHALVGGNEPYGMSTLEYFLYDPIFFLHHSNTDRLWAIWQALQKYRGKPYNTANCAIVRHDTYRKPLQPFGLDSVINPDDETREHSVPRDVFNYKDDFNYEYESLNFNGLSIAQLDRELQRIKSHDRVFAGFLLHEIGQSALVKFYVCKHHVSDCDHYAGEFYILGDEAEMPFAYDRVYKYEISQALHDLDLHVGDNFHLKYEAFNLNGGSLGGVDLSQPSVIFEPAAGSHTA.

Basic residues predominate over residues 1–12 (DFGHSKKIRKNV). The tract at residues 1–20 (DFGHSKKIRKNVHSLTAEEQ) is disordered. Cu cation is bound at residue histidine 46. Residues cysteine 52 and cysteine 63 are joined by a disulfide bond. Cu cation-binding residues include histidine 66, histidine 73, histidine 185, histidine 189, and histidine 216. 2 cysteine pairs are disulfide-bonded: cysteine 175–cysteine 242 and cysteine 335–cysteine 342.

In terms of processing, O-glycosylated. Hemolymph.

Its subcellular location is the secreted. The protein localises to the extracellular space. Its function is as follows. Hemocyanins are copper-containing oxygen carriers occurring freely dissolved in the hemolymph of many mollusks and arthropods. The protein is Hemocyanin 2-c chain of Megathura crenulata (Giant keyhole limpet).